A 177-amino-acid polypeptide reads, in one-letter code: Ribonuclease alpha-sarcin (177 aa).

The signal sequence occupies residues 1–27; sequence MVAIKNLVLVALTAVTALAVPSPLEAR. 2 disulfide bridges follow: cysteine 33–cysteine 175 and cysteine 103–cysteine 159. Residue histidine 77 is part of the active site. The interval 86 to 119 is disordered; it reads DGKLPKGRTPIKFGKSDCDRPPKHSKDGNGKTDH. Positions 99-119 are enriched in basic and acidic residues; the sequence is GKSDCDRPPKHSKDGNGKTDH. Residue glutamate 123 is the Proton acceptor of the active site. Histidine 164 (proton donor) is an active-site residue.

This sequence belongs to the ribonuclease U2 family.

It localises to the secreted. It catalyses the reaction a 28S rRNA containing guanosine-adenosine pair + H2O = an [RNA fragment]-3'-adenosine-3'-phosphate + a 5'-a hydroxy-guanosine-3'-[RNA fragment].. Alpha-sarcin is specific for purines in both single- and double-stranded RNA. Its toxic action on eukaryotic cells is the result of cleavage of a single phosphodiester bond in the 60S subunit of ribosomes. Inhibits both the EFl (elongation factor 1)-dependent binding of aminoacyl-tRNA and the GTP-dependent binding of EF2 (elongation factor 2) to ribosomes. The protein is Ribonuclease alpha-sarcin (sar) of Aspergillus giganteus.